The primary structure comprises 438 residues: Coiled-coil domain-containing protein 78 (438 aa).

Coiled coils occupy residues 74–105 (HLHE…LRGD) and 217–246 (SCQG…YVLR). The segment at 345–381 (FSHREDQHGGPGALLSSPKKRPGGASQGGTSEPQGLD) is disordered.

This sequence belongs to the CCDC78 family. As to expression, expressed primarily in skeletal muscle.

It is found in the cytoplasm. The protein localises to the cytoskeleton. The protein resides in the microtubule organizing center. It localises to the centrosome. Its subcellular location is the centriole. It is found in the perinuclear region. The protein localises to the cell membrane. The protein resides in the sarcolemma. It localises to the sarcoplasmic reticulum. Its function is as follows. Component of the deuterosome, a structure that promotes de novo centriole amplification in multiciliated cells that can generate more than 100 centrioles. Deuterosome-mediated centriole amplification occurs in terminally differentiated multiciliated cells (G1/0) and not in S phase. Essential for centriole amplification and is required for CEP152 localization to the deuterosome. The sequence is that of Coiled-coil domain-containing protein 78 (CCDC78) from Homo sapiens (Human).